The chain runs to 382 residues: MTKFLPIRKTHPILKIINGSLIDLPSPSNISMWWNFGSLLALCLMIQILTGLFLTMYYTANIELAFFSVNYICRNVNYGWLIRTIHANGASFFFICIYLHIGRGIYYESFNLKYTWFIGVIILFMLMATAFMGYVLPWGQMSFWGATVITNLLSAIPYLGTMLVNWIWGGFAVDNATLTRFYTFHFLLPFIILMLTMIHLLFLHQTGSNNPLGLNSNMDKIPFHPYFTYKDLIGFLILMMLLLMLTLSNPYLLGDPDNFIPANPLVTPIHIQPEWYFLFAYAILRSIPNKLGGVIALVMSILILIILPLTFLKKIQGLQFYPINQFMFWIFVMMVILLTWIGARPVEAPYIITGQLLTILYFLYFILNPLISIYWDKLLFNK.

4 helical membrane-spanning segments follow: residues 36–56 (FGSL…FLTM), 80–101 (WLIR…YLHI), 116–136 (WFIG…GYVL), and 181–201 (FYTF…IHLL). Heme b contacts are provided by His86 and His100. 2 residues coordinate heme b: His185 and His199. His204 contacts a ubiquinone. 4 helical membrane passes run 229-249 (YKDL…TLSN), 291-311 (LGGV…PLTF), 323-343 (INQF…WIGA), and 350-370 (YIIT…LNPL).

This sequence belongs to the cytochrome b family. In terms of assembly, the main subunits of complex b-c1 are: cytochrome b, cytochrome c1 and the Rieske protein. Heme b serves as cofactor.

The protein localises to the mitochondrion inner membrane. Its function is as follows. Component of the ubiquinol-cytochrome c reductase complex (complex III or cytochrome b-c1 complex) that is part of the mitochondrial respiratory chain. The b-c1 complex mediates electron transfer from ubiquinol to cytochrome c. Contributes to the generation of a proton gradient across the mitochondrial membrane that is then used for ATP synthesis. The protein is Cytochrome b (MT-CYB) of Samia ricini (Indian eri silkmoth).